Consider the following 149-residue polypeptide: Transcriptional repressor NrdR (149 aa).

The segment at 3-34 (CPFCSAVDTKVIDSRLVAEGHQVRRRRECLLC) is a zinc-finger region. The ATP-cone domain maps to 49-139 (PRVIKSNGSR…VYRSFEDIRE (91 aa)).

This sequence belongs to the NrdR family. The cofactor is Zn(2+).

Its function is as follows. Negatively regulates transcription of bacterial ribonucleotide reductase nrd genes and operons by binding to NrdR-boxes. The sequence is that of Transcriptional repressor NrdR from Aeromonas hydrophila subsp. hydrophila (strain ATCC 7966 / DSM 30187 / BCRC 13018 / CCUG 14551 / JCM 1027 / KCTC 2358 / NCIMB 9240 / NCTC 8049).